A 103-amino-acid chain; its full sequence is Small ribosomal subunit protein uS10 (103 aa).

It belongs to the universal ribosomal protein uS10 family. In terms of assembly, part of the 30S ribosomal subunit.

In terms of biological role, involved in the binding of tRNA to the ribosomes. This chain is Small ribosomal subunit protein uS10, found in Pelodictyon phaeoclathratiforme (strain DSM 5477 / BU-1).